A 679-amino-acid polypeptide reads, in one-letter code: Single-strand DNA endonuclease ASTE1 (679 aa).

Positions 351–400 (TILPTQVENMQQPNAHRISQPIRQIIYGLLLNASPHLDKTSWNALPPQPL) are interaction with SHLD2. Residues 625–645 (RSNSKKKRQKKQNTSCSKNRG) form a disordered region. A compositionally biased stretch (basic residues) spans 626 to 635 (SNSKKKRQKK).

It belongs to the asteroid family. As to quaternary structure, interacts with SHLD1, SHLD2, SHLD3, RIF1 and MAD2L2/REV7.

Functionally, structure-specific DNA endonuclease that specifically cleaves single-stranded DNA and 3' overhang DNA. Contributes to the control of DNA double-strand break repair choice by antagonizing BRCA1-dependent homologous recombination (HR) and promoting non-homologous end-joining (NHEJ). Recruited to the single-stranded DNA ends by SHLD2 and cleaves the 3' exposed DNA ends, therefore inhibiting DNA end resection (necessary for HR) and promoting DNA end protection (necessary for NHEJ). This is Single-strand DNA endonuclease ASTE1 (ASTE1) from Pongo abelii (Sumatran orangutan).